A 474-amino-acid chain; its full sequence is tRNA-2-methylthio-N(6)-dimethylallyladenosine synthase (474 aa).

The 118-residue stretch at 3-120 (KKLLIKTWGC…LPEMIKQSQS (118 aa)) folds into the MTTase N-terminal domain. [4Fe-4S] cluster is bound by residues Cys-12, Cys-49, Cys-83, Cys-157, Cys-161, and Cys-164. Residues 143-375 (RAEGATAFVS…QQQINAQAMR (233 aa)) form the Radical SAM core domain. Residues 378–441 (RLMLGTEQRV…ANSLRGEIVR (64 aa)) form the TRAM domain.

The protein belongs to the methylthiotransferase family. MiaB subfamily. As to quaternary structure, monomer. Requires [4Fe-4S] cluster as cofactor.

It is found in the cytoplasm. It catalyses the reaction N(6)-dimethylallyladenosine(37) in tRNA + (sulfur carrier)-SH + AH2 + 2 S-adenosyl-L-methionine = 2-methylsulfanyl-N(6)-dimethylallyladenosine(37) in tRNA + (sulfur carrier)-H + 5'-deoxyadenosine + L-methionine + A + S-adenosyl-L-homocysteine + 2 H(+). In terms of biological role, catalyzes the methylthiolation of N6-(dimethylallyl)adenosine (i(6)A), leading to the formation of 2-methylthio-N6-(dimethylallyl)adenosine (ms(2)i(6)A) at position 37 in tRNAs that read codons beginning with uridine. The protein is tRNA-2-methylthio-N(6)-dimethylallyladenosine synthase of Vibrio vulnificus (strain CMCP6).